The following is a 181-amino-acid chain: ADP-ribosylation factor 1-like 2 (181 aa).

Residue Gly2 is the site of N-myristoyl glycine attachment. Positions Asn3–Lys16 are important for the stable binding to the membranes. GTP contacts are provided by residues Gly24–Thr32, Asn126–Asp129, and Ala160.

Belongs to the small GTPase superfamily. Arf family.

It is found in the golgi apparatus membrane. It catalyses the reaction GTP + H2O = GDP + phosphate + H(+). With respect to regulation, alternates between an inactive GDP-bound form and an active GTP-bound form. Activated by a guanine nucleotide-exchange factor (GEF) and inactivated by GTPase-activating protein (GAP). Functionally, small GTPase involved in protein trafficking between different compartments. Modulates vesicle budding and uncoating within the Golgi complex. In its GTP-bound form, triggers the recruitment of coatomer proteins to the Golgi membrane. The hydrolysis of ARF1-bound GTP, which is mediated by ARFGAPs proteins, is required for dissociation of coat proteins from Golgi membranes and vesicles. Involved in endoplasmic reticulum dynamics during embryogenesis. Also required for adult germline function. Plays a role in cell shedding during embryogenesis probably by promoting the endocytosis of cell adhesion molecules. During neurogenesis, involved in cell autonomous Q.p neuroblast asymmetric divisions that generate one precursor cell and one apoptotic cell, probably by controlling endocytosis. Plays a role in maintaining mitochondrial morphology. The polypeptide is ADP-ribosylation factor 1-like 2 (arf-1.2) (Caenorhabditis briggsae).